The chain runs to 299 residues: Oxygen-dependent coproporphyrinogen-III oxidase (299 aa).

Serine 92 is a substrate binding site. The Mn(2+) site is built by histidine 96 and histidine 106. Histidine 106 functions as the Proton donor in the catalytic mechanism. Asparagine 108–arginine 110 is a substrate binding site. The Mn(2+) site is built by histidine 145 and histidine 175. Residues tyrosine 240 to glutamate 275 are important for dimerization. Glycine 258–arginine 260 contacts substrate.

It belongs to the aerobic coproporphyrinogen-III oxidase family. Homodimer. The cofactor is Mn(2+).

It is found in the cytoplasm. It catalyses the reaction coproporphyrinogen III + O2 + 2 H(+) = protoporphyrinogen IX + 2 CO2 + 2 H2O. Its pathway is porphyrin-containing compound metabolism; protoporphyrin-IX biosynthesis; protoporphyrinogen-IX from coproporphyrinogen-III (O2 route): step 1/1. Involved in the heme biosynthesis. Catalyzes the aerobic oxidative decarboxylation of propionate groups of rings A and B of coproporphyrinogen-III to yield the vinyl groups in protoporphyrinogen-IX. In Escherichia coli O127:H6 (strain E2348/69 / EPEC), this protein is Oxygen-dependent coproporphyrinogen-III oxidase.